The chain runs to 200 residues: Dephospho-CoA kinase (200 aa).

The region spanning 4–200 (VIGLTGGIAS…VILKKWNIID (197 aa)) is the DPCK domain. 12–17 (ASGKST) is a binding site for ATP.

The protein belongs to the CoaE family.

The protein resides in the cytoplasm. It catalyses the reaction 3'-dephospho-CoA + ATP = ADP + CoA + H(+). Its pathway is cofactor biosynthesis; coenzyme A biosynthesis; CoA from (R)-pantothenate: step 5/5. In terms of biological role, catalyzes the phosphorylation of the 3'-hydroxyl group of dephosphocoenzyme A to form coenzyme A. This is Dephospho-CoA kinase from Bacillus cereus (strain ATCC 14579 / DSM 31 / CCUG 7414 / JCM 2152 / NBRC 15305 / NCIMB 9373 / NCTC 2599 / NRRL B-3711).